A 329-amino-acid chain; its full sequence is Oxidoreductase sirO (329 aa).

Residue aspartate 54 participates in NADP(+) binding. Tyrosine 59 (proton donor) is an active-site residue. Histidine 118 lines the substrate pocket. NADP(+) contacts are provided by residues 148 to 149, glutamine 174, 203 to 213, and 288 to 296; these read SN, SPLCCGLLINA, and SSARQLEES.

This sequence belongs to the aldo/keto reductase family. Aldo/keto reductase 2 subfamily.

It participates in mycotoxin biosynthesis. Oxidoreductase; part of the gene cluster that mediates the biosynthesis of sirodesmin PL, an epipolythiodioxopiperazine (ETP) characterized by a disulfide bridged cyclic dipeptide and that acts as a phytotoxin which is involved in the blackleg didease of canola. SirD catalyzes the O-prenylation of L-tyrosine (L-Tyr) in the presence of dimethylallyl diphosphate (DMAPP) to yield 4-O-dimethylallyl-L-Tyr, and therefore represents probably the first pathway-specific enzyme in the biosynthesis of sirodesmin PL. 4-O-dimethylallyl-L-Tyr, then undergoes condensation with L-Ser in a reaction catalyzed by the non-ribosomal peptide synthase sirP to form the diketopiperazine (DKP) backbone. Further bishydroxylation of the DKP performed by the cytochrome P450 monooxygenase sirC leads to the production of the intermediate phomamide. This step is essential to form the reactive thiol group required for toxicity of sirodesmin PL. The next steps of sirodesmin biosynthesis are not well understood yet, but some predictions could be made from intermediate compounds identification. Phomamide is converted into phomalizarine via oxidation, probably by sirT. Further oxidation, methylation (by sirM or sirN) and reduction steps convert phomalizarine to deacetyl sirodesmin. Finally, acetyltransferase sirH probably acetylates deacetyl sirodesmin to produce sirodesmin PL. The chain is Oxidoreductase sirO from Leptosphaeria maculans (Blackleg fungus).